The following is a 218-amino-acid chain: Eukaryotic translation initiation factor 3 subunit K (218 aa).

An N-acetylalanine modification is found at A2. T28 bears the Phosphothreonine mark. Positions 42–204 (YDLEANLAVL…SIKPKNIVEK (163 aa)) constitute a PCI domain. S217 carries the post-translational modification Phosphoserine.

Component of the eukaryotic translation initiation factor 3 (eIF-3) complex, which is composed of 13 subunits: EIF3A, EIF3B, EIF3C, EIF3D, EIF3E, EIF3F, EIF3G, EIF3H, EIF3I, EIF3J, EIF3K, EIF3L and EIF3M. The eIF-3 complex appears to include 3 stable modules: module A is composed of EIF3A, EIF3B, EIF3G and EIF3I; module B is composed of EIF3F, EIF3H, and EIF3M; and module C is composed of EIF3C, EIF3D, EIF3E, EIF3K and EIF3L. EIF3C of module C binds EIF3B of module A and EIF3H of module B, thereby linking the three modules. EIF3J is a labile subunit that binds to the eIF-3 complex via EIF3B. The eIF-3 complex interacts with RPS6KB1 under conditions of nutrient depletion. Mitogenic stimulation leads to binding and activation of a complex composed of MTOR and RPTOR, leading to phosphorylation and release of RPS6KB1 and binding of EIF4B to eIF-3. Interacts with CCND3, but not with CCND1 and CCND2. Ubiquitous, with the highest levels of expression in brain, testis and kidney.

It is found in the nucleus. The protein localises to the cytoplasm. Functionally, component of the eukaryotic translation initiation factor 3 (eIF-3) complex, which is required for several steps in the initiation of protein synthesis. The eIF-3 complex associates with the 40S ribosome and facilitates the recruitment of eIF-1, eIF-1A, eIF-2:GTP:methionyl-tRNAi and eIF-5 to form the 43S pre-initiation complex (43S PIC). The eIF-3 complex stimulates mRNA recruitment to the 43S PIC and scanning of the mRNA for AUG recognition. The eIF-3 complex is also required for disassembly and recycling of post-termination ribosomal complexes and subsequently prevents premature joining of the 40S and 60S ribosomal subunits prior to initiation. The eIF-3 complex specifically targets and initiates translation of a subset of mRNAs involved in cell proliferation, including cell cycling, differentiation and apoptosis, and uses different modes of RNA stem-loop binding to exert either translational activation or repression. The protein is Eukaryotic translation initiation factor 3 subunit K of Homo sapiens (Human).